The sequence spans 331 residues: Phosphate acyltransferase (331 aa).

This sequence belongs to the PlsX family. In terms of assembly, homodimer. Probably interacts with PlsY.

It is found in the cytoplasm. The catalysed reaction is a fatty acyl-[ACP] + phosphate = an acyl phosphate + holo-[ACP]. It functions in the pathway lipid metabolism; phospholipid metabolism. In terms of biological role, catalyzes the reversible formation of acyl-phosphate (acyl-PO(4)) from acyl-[acyl-carrier-protein] (acyl-ACP). This enzyme utilizes acyl-ACP as fatty acyl donor, but not acyl-CoA. This Chlorobaculum tepidum (strain ATCC 49652 / DSM 12025 / NBRC 103806 / TLS) (Chlorobium tepidum) protein is Phosphate acyltransferase.